We begin with the raw amino-acid sequence, 245 residues long: Probable phosphatase YcdX (245 aa).

Positions 7, 9, 15, 40, 73, 101, 131, 192, and 194 each coordinate Zn(2+).

This sequence belongs to the PHP family. In terms of assembly, homotrimer. Requires Zn(2+) as cofactor.

In Escherichia coli O17:K52:H18 (strain UMN026 / ExPEC), this protein is Probable phosphatase YcdX.